The sequence spans 424 residues: Glutamate-1-semialdehyde 2,1-aminomutase (424 aa).

The residue at position 260 (Lys260) is an N6-(pyridoxal phosphate)lysine.

This sequence belongs to the class-III pyridoxal-phosphate-dependent aminotransferase family. HemL subfamily. It depends on pyridoxal 5'-phosphate as a cofactor.

Its subcellular location is the cytoplasm. The catalysed reaction is (S)-4-amino-5-oxopentanoate = 5-aminolevulinate. The protein operates within porphyrin-containing compound metabolism; protoporphyrin-IX biosynthesis; 5-aminolevulinate from L-glutamyl-tRNA(Glu): step 2/2. The sequence is that of Glutamate-1-semialdehyde 2,1-aminomutase from Nitrosopumilus maritimus (strain SCM1).